Reading from the N-terminus, the 3498-residue chain is Mediator of RNA polymerase II transcription subunit 12 (3498 aa).

Disordered stretches follow at residues 365–456, 497–764, 2209–2576, 2589–2620, 2637–2889, and 2917–3498; these read IKQH…HTDI, GGVG…EPEK, AKKR…AYMK, ENNR…EAYA, LRKE…KEKQ, and NVAG…PNQY. Positions 368 to 394 are enriched in basic residues; the sequence is HEKRKAGSLKKSERRRRRGLSKNRPKK. The span at 404–416 shows a compositional bias: basic and acidic residues; it reads SLDHDKVQIKQEP. Polar residues-rich tracts occupy residues 424–440 and 512–536; these read GQQS…SHQY and SNPT…SASP. Residues 539 to 570 adopt a coiled-coil conformation; that stretch reads SVDKENECEKKEDESKTKEKNKDKEKDKEKEK. Composition is skewed to basic and acidic residues over residues 540–578 and 593–614; these read VDKE…HTND and ANDK…TGKE. Residues 621–630 show a composition bias toward low complexity; sequence SKTAKTSTSA. Basic and acidic residues-rich tracts occupy residues 691–719, 738–764, and 2209–2285; these read EVDK…KKAD, ESEK…EPEK, and AKKR…KRAS. The interval 2142 to 3498 is required for nuclear localization; sequence QTTRLDKVAK…YPNQQPPNQY (1357 aa). Residues 2203 to 2290 are a coiled coil; that stretch reads VIDEEEAKKR…EKRASDAAAA (88 aa). 2 stretches are compositionally biased toward low complexity: residues 2342–2360 and 2409–2431; these read RADT…APIA and LADA…SSMP. The stretch at 2395–2420 forms a coiled coil; it reads RNLLNRKKEEKRNSLADASAAAAAAN. Residues 2444 to 2456 show a composition bias toward polar residues; that stretch reads QSAGATQQLQGMQ. A compositionally biased stretch (low complexity) spans 2459-2479; that stretch reads QMGGSMSGMNQNMGGMNQSMS. The span at 2514–2530 shows a compositional bias: polar residues; that stretch reads NRSSGPVSSETRQQIME. Basic and acidic residues-rich tracts occupy residues 2547 to 2576, 2589 to 2616, and 2637 to 2724; these read QKQR…AYMK, ENNR…RAAE, and LRKE…EQQR. Low complexity predominate over residues 2725–2770; it reads RSQQNPYMNQQGQYSQQPPPSYQQSSYPNNYQPGQQGNQPPNYQQP. Residues 2771–2783 are compositionally biased toward polar residues; the sequence is SHQSMQQGHQAGY. A compositionally biased stretch (low complexity) spans 2784-2810; sequence QQTSNQMQMNMQQQQNRQQGGPQQSFS. Polar residues-rich tracts occupy residues 2816–2827, 2842–2852, 2868–2881, and 2926–2956; these read NQPSQPGYSGYN, RNPFGNQQDMQ, HAQQ…QLSL, and GQQQ…SSNP. Positions 2957–2993 are enriched in low complexity; it reads QGGMQSYQQQQPVLGQPGPIQTGQSTQQQIPAQSQQQ. The segment covering 2994–3009 has biased composition (polar residues); that stretch reads YNSGRPQMHTTPTKND. Positions 3039 to 3100 are enriched in low complexity; the sequence is GQNVPGGYQQ…NVSQSQSAAQ (62 aa). Residues 3103–3127 are compositionally biased toward polar residues; sequence RPSQDSAYQQSGYNQTGNQSYQRPD. 2 stretches are compositionally biased toward low complexity: residues 3128–3184 and 3192–3223; these read QQQQ…SAQY and QGYD…QTQQ. Positions 3231 to 3253 are enriched in polar residues; sequence SGYTANSGGSSNILNQSMEESGL. The span at 3254–3311 shows a compositional bias: low complexity; it reads NQGFSGASSNASSQQGGSSQMQQSGYGMPGNQMQMQQNQKQQVQRGMPTGMGQTNMGQ. The segment covering 3312 to 3321 has biased composition (gly residues); that stretch reads SGMGQSGMGQ. 2 stretches are compositionally biased toward low complexity: residues 3336 to 3356 and 3370 to 3408; these read QGQQ…NQRG and QQQH…QGQQ. The segment covering 3414–3425 has biased composition (polar residues); the sequence is PSQQQSGAAYSN. Residues 3426–3436 are compositionally biased toward low complexity; that stretch reads QMQFQGVRQGQ. Over residues 3437 to 3446 the composition is skewed to gly residues; sequence QGMGGMGGSG. Residues 3447–3498 are compositionally biased toward low complexity; the sequence is QQQPQTQPHGSNQYYQQQQDQRMQQQPQQPGQQQQHGYGMGQYPNQQPPNQY.

Belongs to the Mediator complex subunit 12 family. As to quaternary structure, component of the Mediator complex. As to expression, ubiquitously expressed.

Its subcellular location is the nucleus. In terms of biological role, component of the Mediator complex, a coactivator involved in regulated gene transcription of nearly all RNA polymerase II-dependent genes. Mediator functions as a bridge to convey information from gene-specific regulatory proteins to the basal RNA polymerase II transcription machinery. Mediator is recruited to promoters by direct interactions with regulatory proteins and serves as a scaffold for the assembly of a functional preinitiation complex with RNA polymerase II and the general transcription factors. Functions downstream of let-60 during vulval induction. Required for asymmetric division of T-cells and for hypodermal development. This Caenorhabditis elegans protein is Mediator of RNA polymerase II transcription subunit 12 (dpy-22).